Here is a 448-residue protein sequence, read N- to C-terminus: Glucose-6-phosphate isomerase (448 aa).

E290 (proton donor) is an active-site residue. Active-site residues include H311 and K425.

Belongs to the GPI family.

It localises to the cytoplasm. It carries out the reaction alpha-D-glucose 6-phosphate = beta-D-fructose 6-phosphate. Its pathway is carbohydrate biosynthesis; gluconeogenesis. The protein operates within carbohydrate degradation; glycolysis; D-glyceraldehyde 3-phosphate and glycerone phosphate from D-glucose: step 2/4. Functionally, catalyzes the reversible isomerization of glucose-6-phosphate to fructose-6-phosphate. The sequence is that of Glucose-6-phosphate isomerase from Levilactobacillus brevis (strain ATCC 367 / BCRC 12310 / CIP 105137 / JCM 1170 / LMG 11437 / NCIMB 947 / NCTC 947) (Lactobacillus brevis).